We begin with the raw amino-acid sequence, 164 residues long: Phosphopantetheine adenylyltransferase (164 aa).

A substrate-binding site is contributed by Ser-10. ATP is bound by residues 10–11 (SF) and His-18. Substrate is bound by residues Lys-42, Met-74, and Arg-88. ATP is bound by residues 89–91 (GLR), Glu-99, and 124–130 (YFFVSAR).

This sequence belongs to the bacterial CoaD family. As to quaternary structure, homohexamer. Mg(2+) serves as cofactor.

It is found in the cytoplasm. It catalyses the reaction (R)-4'-phosphopantetheine + ATP + H(+) = 3'-dephospho-CoA + diphosphate. It participates in cofactor biosynthesis; coenzyme A biosynthesis; CoA from (R)-pantothenate: step 4/5. Its function is as follows. Reversibly transfers an adenylyl group from ATP to 4'-phosphopantetheine, yielding dephospho-CoA (dPCoA) and pyrophosphate. This chain is Phosphopantetheine adenylyltransferase, found in Anaeromyxobacter dehalogenans (strain 2CP-C).